Here is a 487-residue protein sequence, read N- to C-terminus: MAGKRELLMLENFIGGKFLPCNSYIDSYDPSTGEVYCKVPNSGKEEIEAAVEAAREAFPAWSSRSPQERSLVLNRLADVLEQSLEELAQAESKDQGKTLTLARTMDIPRSVLNFRFFASSNLHHVSECTQMSHLGCMHYTVRTPVGIAGLISPWNLPLYLLTWKIAPAIAAGNTVIAKPSEMTSVTAWMFCKLLDKAGVPPGVINIVFGTGPRVGEALVSHPEVPLISFTGSQPTAERITQLSAPHCKKLSLELGGKNPAIIFEDANLEECIPATVRSSFANQGEICLCTSRIFVQRSIYSEFLKRFVEATRKWKVGVPSDPSANMGALISKAHLEKVRSYVLKAQTEGARILCGEGVDQLSLPLRNQAGYFMLPTVITDIKDESRCMTEEIFGPVTCVVPFDSEEEVITRANSVRYGLAATVWSKDVGRIHRVAKKLQSGLVWTNCWLIRELNLPFGGMKSSGIGREGAKDSYDFFTEIKTITIKY.

Residue 231–236 coordinates NAD(+); sequence GSQPTA. The Proton acceptor role is filled by Glu-253. The active-site Nucleophile is the Cys-287. The residue at position 362 (Ser-362) is a Phosphoserine.

This sequence belongs to the aldehyde dehydrogenase family. Detected in hepatocytes and in proximal and distal convoluted tubules in kidney cortex (at protein level). Highly expressed in adult liver and in kidney cortex. First detected in embryonic liver after 15 days of development.

The protein localises to the cytoplasm. It carries out the reaction 2-aminomuconate 6-semialdehyde + NAD(+) + H2O = (2Z,4E)-2-aminomuconate + NADH + 2 H(+). It participates in amino-acid degradation; L-kynurenine degradation. Functionally, catalyzes the NAD-dependent oxidation of 2-aminomuconic semialdehyde of the kynurenine metabolic pathway in L-tryptophan degradation. The sequence is that of 2-aminomuconic semialdehyde dehydrogenase (Aldh8a1) from Mus musculus (Mouse).